The following is a 373-amino-acid chain: Ubiquitin carboxyl-terminal hydrolase 50 (373 aa).

Residues 44–364 form the USP domain; that stretch reads TGLRNLGNTC…TAYLLFYSCQ (321 aa). Cys-53 acts as the Nucleophile in catalysis. His-322 serves as the catalytic Proton acceptor.

Belongs to the peptidase C19 family.

Its subcellular location is the cytoplasm. The protein localises to the cytoskeleton. The protein resides in the microtubule organizing center. It is found in the centrosome. It localises to the nucleus. It carries out the reaction Thiol-dependent hydrolysis of ester, thioester, amide, peptide and isopeptide bonds formed by the C-terminal Gly of ubiquitin (a 76-residue protein attached to proteins as an intracellular targeting signal).. Its function is as follows. Deubiquitinating enzyme that removes conjugated ubiquitin from specific proteins to regulate different cellular processes. Regulates the inflammasome signaling pathway by deubiquitinating 'Lys-63'-linked polyubiquitination of the PYCARD/ASC adapter protein. Regulates the ubiquitination and stability of the ACE2 protein. Acts as a negative regulator of the G2/M checkpoint pathway, by preventing serine/threonine kinase WEE1 degradation, thereby repressing entry into mitosis following activation of the G2/M DNA damage checkpoint. The chain is Ubiquitin carboxyl-terminal hydrolase 50 (USP50) from Macaca fascicularis (Crab-eating macaque).